A 374-amino-acid polypeptide reads, in one-letter code: Fasciclin-like arabinogalactan protein CTB11 (374 aa).

The signal sequence occupies residues 1 to 18 (MHFPALAVAGCLLSRATA). 2 consecutive FAS1 domains span residues 19–171 (QSLD…DANM) and 173–302 (LPHN…DGAL). 5 N-linked (GlcNAc...) asparagine glycosylation sites follow: asparagine 52, asparagine 72, asparagine 120, asparagine 132, and asparagine 176. A helical membrane pass occupies residues 328 to 348 (ILASHQLTLLAVLAMALVSIL).

Belongs to the fasciclin-like AGP family.

The protein resides in the membrane. It participates in mycotoxin biosynthesis. Functionally, fasciclin-like arabinogalactan protein; part of the gene cluster that mediates the biosynthesis of cercosporin, a light-activated, non-host-selective toxin. The perylenequinone chromophore of cercosporin absorbs light energy to attain an electronically-activated triplet state and produces active oxygen species such as the hydroxyl radical, superoxide, hydrogen peroxide or singlet oxygen upon reaction with oxygen molecules. These reactive oxygen species cause damage to various cellular components including lipids, proteins and nucleic acids. The first step of cercosporin biosynthesis is performed by the polyketide synthase CTB1 which catalyzes the formation of nor-toralactone. The starter unit acyltransferase (SAT) domain of CTB1 initiates polyketide extension by the selective utilization of acetyl-CoA, which is elongated to the heptaketide in the beta-ketoacyl synthase (KS) domain by successive condensations with six malonyl units introduced by the malonyl acyltransferase (MAT) domain. The product template (PT) domain catalyzes C4-C9 and C2-C11 aldol cyclizations and dehydrations to a trihydroxynaphthalene, which is thought to be delivered to the thioesterase (TE) domain for product release. The bifunctional enzyme CTB3 then methylates nor-toralactone to toralactone before conducting an unusual oxidative aromatic ring opening. The O-methyltransferase CTB2 further methylates the nascent OH-6 of the CBT3 product, blocking further oxidation at this site before the reductase CTB6 reduces the 2-oxopropyl ketone at position C7, giving naphthalene. The FAD-dependent monooxygenase CTB5 in concert with the multicopper oxidase CTB12 are responsible for homodimerization of naphthalene with CTB7 installing the dioxepine moiety, finally producing cercosporin. The fasciclin domain-containing protein CTB11 might act with CTB5 and CTB12 whereas the roles of CTB9 and CTB10 have still to be elucidated. The protein is Fasciclin-like arabinogalactan protein CTB11 of Cercospora beticola (Sugarbeet leaf spot fungus).